The sequence spans 448 residues: Maltoporin (448 aa).

The first 25 residues, 1–25 (MMITLRKLPLAVAVMAGIFAAQASA), serve as a signal peptide directing secretion.

It belongs to the porin LamB (TC 1.B.3) family. In terms of assembly, homotrimer formed of three 18-stranded antiparallel beta-barrels, containing three independent channels.

Its subcellular location is the cell outer membrane. It carries out the reaction beta-maltose(in) = beta-maltose(out). Functionally, involved in the transport of maltose and maltodextrins. The chain is Maltoporin from Cronobacter sakazakii (strain ATCC BAA-894) (Enterobacter sakazakii).